Here is a 560-residue protein sequence, read N- to C-terminus: MSLISILSPLITSEGLDSRIKPSPKKDASTTTKPSLWKTTEFKFYYIAFLVVVPLMFYAGLQASSPENPNYARYERLLSQGWLFGRKVDNSDSQYRFFRDNFALLSVLMLVHTSIKRIVLYSTNITKLRFDLIFGLIFLVAAHGVNSIRILAHMLILYAIAHVLKNFRRIATISIWIYGISTLFINDNFRAYPFGNICSFLSPLDHWYRGIIPRWDVFFNFTLLRVLSYNLDFLERWENLQKKKSPSYESKEAKSAILLNERARLTAAHPIQDYSLMNYIAYVTYTPLFIAGPIITFNDYVYQSKHTLPSINFKFIFYYAVRFVIALLSMEFILHFLHVVAISKTKAWENDTPFQISMIGLFNLNIIWLKLLIPWRLFRLWALLDGIDTPENMIRCVDNNYSSLAFWRAWHRSYNKWVVRYIYIPLGGSKNRVLTSLAVFSFVAIWHDIELKLLLWGWLIVLFLLPEIFATQIFSHYTDAVWYRHVCAVGAVFNIWVMMIANLFGFCLGSDGTKKLLSDMFCTVSGFKFVILASVSLFIAVQIMFEIREEEKRHGIYLKC.

The Extracellular segment spans residues 1 to 43 (MSLISILSPLITSEGLDSRIKPSPKKDASTTTKPSLWKTTEFK). Residues 44-64 (FYYIAFLVVVPLMFYAGLQAS) form a helical membrane-spanning segment. At 65–101 (SPENPNYARYERLLSQGWLFGRKVDNSDSQYRFFRDN) the chain is on the cytoplasmic side. A helical transmembrane segment spans residues 102–122 (FALLSVLMLVHTSIKRIVLYS). The Extracellular segment spans residues 123-131 (TNITKLRFD). The helical transmembrane segment at 132–152 (LIFGLIFLVAAHGVNSIRILA) threads the bilayer. At 153–165 (HMLILYAIAHVLK) the chain is on the cytoplasmic side. The helical transmembrane segment at 166–185 (NFRRIATISIWIYGISTLFI) threads the bilayer. The Extracellular segment spans residues 186 to 276 (NDNFRAYPFG…AAHPIQDYSL (91 aa)). The helical transmembrane segment at 277–297 (MNYIAYVTYTPLFIAGPIITF) threads the bilayer. The Cytoplasmic segment spans residues 298–322 (NDYVYQSKHTLPSINFKFIFYYAVR). The helical transmembrane segment at 323–343 (FVIALLSMEFILHFLHVVAIS) threads the bilayer. Residues 344–352 (KTKAWENDT) lie on the Extracellular side of the membrane. A helical membrane pass occupies residues 353 to 373 (PFQISMIGLFNLNIIWLKLLI). Residues 374 to 432 (PWRLFRLWALLDGIDTPENMIRCVDNNYSSLAFWRAWHRSYNKWVVRYIYIPLGGSKNR) lie on the Cytoplasmic side of the membrane. Transmembrane regions (helical) follow at residues 433–453 (VLTSLAVFSFVAIWHDIELKL) and 454–474 (LLWGWLIVLFLLPEIFATQIF). Residue His-447 is part of the active site. At 475–485 (SHYTDAVWYRH) the chain is on the cytoplasmic side. Residues 486-506 (VCAVGAVFNIWVMMIANLFGF) form a helical membrane-spanning segment. The Extracellular segment spans residues 507-526 (CLGSDGTKKLLSDMFCTVSG). A helical membrane pass occupies residues 527–547 (FKFVILASVSLFIAVQIMFEI). The Cytoplasmic segment spans residues 548 to 560 (REEEKRHGIYLKC).

This sequence belongs to the membrane-bound acyltransferase family. In terms of assembly, interacts with mitochondrial outer membrane voltage-dependent anion channel (VDAC) POR1.

It is found in the cell membrane. It localises to the endoplasmic reticulum membrane. The protein localises to the mitochondrion membrane. Membrane-bound O-acyltransferase involved in the remodeling of glycosylphosphatidylinositol (GPI) anchors. Acts only on GPI-anchored proteins, but not on free GPI lipids. Acts as an acyltransferase for GPI anchors that adds C26 fatty acids to the sn2 position of lyso-PI-containing GPI anchors. PER1 first deacylates, GUP1 subsequently reacylates the anchor lipid, thus replacing a shorter fatty acid (C16:0 or C18:0) by C26:0. Also involved in lipid metabolism, having profound effects on sphingolipid-sterol-ordered domains integrity and assembly. Together with GUP2, has an influence on the chemical composition of the yeast extracellular matrix (yECM) in yeast multicellular aggregates, such as biofilms and colonies. Involved in cell integrity and apoptosis. The protein is Membrane-bound O-acyltransferase GUP1 (GUP1) of Saccharomyces cerevisiae (strain ATCC 204508 / S288c) (Baker's yeast).